The sequence spans 104 residues: UPF0213 protein VIBHAR_05350 (104 aa).

The 76-residue stretch at 7–82 (QRWSVYLIRN…KQLTKTKKEL (76 aa)) folds into the GIY-YIG domain.

The protein belongs to the UPF0213 family.

The chain is UPF0213 protein VIBHAR_05350 from Vibrio campbellii (strain ATCC BAA-1116).